The following is a 627-amino-acid chain: Sphingomyelin phosphodiesterase (627 aa).

The first 44 residues, 1-44 (MPHHRASSGQDHLRAGWEQRLERSLPAPRVGLLWMGLGLALVLA), serve as a signal peptide directing secretion. The Saposin B-type domain occupies 83–167 (QNLTCPACKV…LLGSSCGHWD (85 aa)). N84 is a glycosylation site (N-linked (GlcNAc...) asparagine). 3 disulfides stabilise this stretch: C87–C163, C90–C155, and C118–C129. N-linked (GlcNAc...) asparagine glycosylation is present at N173. Zn(2+) contacts are provided by D204 and H206. Disulfide bonds link C219–C224 and C225–C248. D276 and N316 together coordinate Zn(2+). 2 N-linked (GlcNAc...) asparagine glycosylation sites follow: N333 and N393. A disulfide bond links C383 and C429. H423, H455, and H457 together coordinate Zn(2+). S506 is subject to Phosphoserine. N518 is a glycosylation site (N-linked (GlcNAc...) asparagine). 2 cysteine pairs are disulfide-bonded: C582/C586 and C592/C605. Residue N611 is glycosylated (N-linked (GlcNAc...) asparagine).

It belongs to the acid sphingomyelinase family. In terms of assembly, monomer. Interacts with SORT1; the interaction is required for SMPD1 targeting to lysosomes. Zn(2+) serves as cofactor. Post-translationally, proteolytically processed. Mature lysosomal form arises from C-terminal proteolytic processing of pro-sphingomyelin phosphodiesterase. In terms of processing, both lysosomal and secreted forms are glycosylated but they show a differential pattern of glycosylation. Phosphorylated at Ser-506 by PRKCD upon stress stimuli. Phosphorylation is required for secretion. Post-translationally, this form is generated following cleavage by CASP7 in the extracellular milieu. It shows increased activity.

The protein localises to the lysosome. It is found in the lipid droplet. It localises to the secreted. Its subcellular location is the extracellular space. It carries out the reaction a sphingomyelin + H2O = phosphocholine + an N-acylsphing-4-enine + H(+). The catalysed reaction is N-(octadecanoyl)-sphing-4-enine-1-phosphocholine + H2O = N-octadecanoylsphing-4-enine + phosphocholine + H(+). The enzyme catalyses a 1,2-diacyl-sn-glycero-3-phosphocholine + H2O = phosphocholine + a 1,2-diacyl-sn-glycerol + H(+). It catalyses the reaction 1,2-dihexadecanoyl-sn-glycero-3-phosphocholine + H2O = 1,2-dihexadecanoyl-sn-glycerol + phosphocholine + H(+). Hydrolysis of liposomal sphingomyelin is stimulated by incorporation of diacylglycerol (DAG), ceramide and free fatty acids into the liposomal membranes. Phosphatidylcholine hydrolysis is inhibited by incorporation of cholesterol, ceramide, DAG, monoacylglycerol and fatty acids. Converts sphingomyelin to ceramide. Exists as two enzymatic forms that arise from alternative trafficking of a single protein precursor, one that is targeted to the endolysosomal compartment, whereas the other is released extracellularly. However, in response to various forms of stress, lysosomal exocytosis may represent a major source of the secretory form. In terms of biological role, in the lysosomes, converts sphingomyelin to ceramide. Plays an important role in the export of cholesterol from the intraendolysosomal membranes. Also has phospholipase C activities toward 1,2-diacylglycerolphosphocholine and 1,2-diacylglycerolphosphoglycerol. Modulates stress-induced apoptosis through the production of ceramide. Its function is as follows. When secreted, modulates cell signaling with its ability to reorganize the plasma membrane by converting sphingomyelin to ceramide. Secreted form is increased in response to stress and inflammatory mediators such as IL1B, IFNG or TNF as well as upon infection with bacteria and viruses. Produces the release of ceramide in the outer leaflet of the plasma membrane playing a central role in host defense. Ceramide reorganizes these rafts into larger signaling platforms that are required to internalize P.aeruginosa, induce apoptosis and regulate the cytokine response in infected cells. In wounded cells, the lysosomal form is released extracellularly in the presence of Ca(2+) and promotes endocytosis and plasma membrane repair. Functionally, this form is generated following cleavage by CASP7 in the extracellular milieu in response to bacterial infection. It shows increased ability to convert sphingomyelin to ceramide and promotes plasma membrane repair. Plasma membrane repair by ceramide counteracts the action of gasdermin-D (GSDMD) perforin (PRF1) pores that are formed in response to bacterial infection. (Microbial infection) Secretion is activated by bacteria such as P.aeruginosa, this activation results in the release of ceramide in the outer leaflet of the plasma membrane which facilitates the infection. The chain is Sphingomyelin phosphodiesterase from Mus musculus (Mouse).